The primary structure comprises 396 residues: MSEYSIFTSESVSEGHPDKIADQISDAVLDAIIAEDKHARVACETLVKTGVAIVAGEVTTSAWVDLEQLVRDVIVDIGYNSSEVGFDGATCGIINIIGKQSVDIAQGVDRTKPEDQGAGDQGLMFGYASNETDVLMPAPIRFSHALVERQAEARKNGLLPWLRPDAKSQVTCRYENGQVVGIDAVVLSTQHNPDVKQSDLREAVMELIIKHSLPAELLHKDTQYHINPTGQFVIGGPVGDCGLTGRKIIVDTYGGMARHGGGAFSGKDPSKVDRSAAYAGRYVAKNIVAAGLADRCEIQVSYAIGVAQPTSISLNTFGTGKLGDDKIIALVREHFDLRPYAITRMLDLLHPMYRATAAYGHFGRTPYEMTVGADTFTAFTWEKTDKADALRAAAGL.

His-16 contributes to the ATP binding site. Residue Asp-18 participates in Mg(2+) binding. Glu-44 contributes to the K(+) binding site. L-methionine-binding residues include Glu-57 and Gln-100. Residues 100–110 (QSVDIAQGVDR) form a flexible loop region. ATP-binding positions include 165–167 (DAK), Asp-240, 246–247 (RK), Ala-263, and Lys-267. An L-methionine-binding site is contributed by Asp-240. L-methionine is bound at residue Lys-271.

This sequence belongs to the AdoMet synthase family. As to quaternary structure, homotetramer; dimer of dimers. Mg(2+) serves as cofactor. The cofactor is K(+).

Its subcellular location is the cytoplasm. It catalyses the reaction L-methionine + ATP + H2O = S-adenosyl-L-methionine + phosphate + diphosphate. It participates in amino-acid biosynthesis; S-adenosyl-L-methionine biosynthesis; S-adenosyl-L-methionine from L-methionine: step 1/1. Catalyzes the formation of S-adenosylmethionine (AdoMet) from methionine and ATP. The overall synthetic reaction is composed of two sequential steps, AdoMet formation and the subsequent tripolyphosphate hydrolysis which occurs prior to release of AdoMet from the enzyme. The chain is S-adenosylmethionine synthase from Stutzerimonas stutzeri (strain A1501) (Pseudomonas stutzeri).